Here is a 184-residue protein sequence, read N- to C-terminus: Glucosamine 6-phosphate N-acetyltransferase (184 aa).

Residues 39-184 (LVLRPLCTAD…ENYMCRRFLK (146 aa)) form the N-acetyltransferase domain. Substrate-binding positions include Thr61, 108-111 (KFIH), and 120-122 (EDV). Position 130 to 135 (130 to 135 (GKQLGK)) interacts with acetyl-CoA. 151–152 (YK) provides a ligand contact to substrate. 165–167 (YKK) serves as a coordination point for acetyl-CoA. Glu175 and Arg181 together coordinate substrate.

The protein belongs to the acetyltransferase family. GNA1 subfamily. In terms of assembly, homodimer. Ubiquitous. Shows a strong differential expression pattern in adult hematopoietic precursor cells.

It is found in the golgi apparatus membrane. The protein resides in the endosome membrane. It catalyses the reaction D-glucosamine 6-phosphate + acetyl-CoA = N-acetyl-D-glucosamine 6-phosphate + CoA + H(+). The protein operates within nucleotide-sugar biosynthesis; UDP-N-acetyl-alpha-D-glucosamine biosynthesis; N-acetyl-alpha-D-glucosamine 1-phosphate from alpha-D-glucosamine 6-phosphate (route I): step 1/2. The sequence is that of Glucosamine 6-phosphate N-acetyltransferase (Gnpnat1) from Mus musculus (Mouse).